Reading from the N-terminus, the 1212-residue chain is Periplasmic/secreted acid trehalase ATH1 (1212 aa).

Residues 1 to 82 (MGFKDKILFW…STRVKIRRQN (82 aa)) lie on the Cytoplasmic side of the membrane. A helical transmembrane segment spans residues 83–103 (ILNTTLILGMLIALVIWTAIL). The Periplasmic segment spans residues 104 to 1212 (STNSYFSSSL…ATIREIVLQE (1109 aa)). Asn243, Asn275, Asn296, Asn362, Asn414, Asn428, and Asn521 each carry an N-linked (GlcNAc...) asparagine glycan. 546–547 (WD) contributes to the substrate binding site. Residues Asn572, Asn601, Asn661, and Asn671 are each glycosylated (N-linked (GlcNAc...) asparagine). Catalysis depends on Glu677, which acts as the Proton donor. 2 N-linked (GlcNAc...) asparagine glycosylation sites follow: Asn729 and Asn738. Residue 744-745 (KQ) coordinates substrate. Asn912, Asn938, Asn993, Asn1011, Asn1033, Asn1052, Asn1070, Asn1097, and Asn1165 each carry an N-linked (GlcNAc...) asparagine glycan.

Belongs to the glycosyl hydrolase 65 family. In terms of assembly, homodimer.

It is found in the secreted. The protein resides in the periplasm. It localises to the membrane. It carries out the reaction alpha,alpha-trehalose + H2O = alpha-D-glucose + beta-D-glucose. In terms of biological role, periplasmic/secreted acid trehalase that catalyzes hydrolysis of the disaccharide trehalose and required for growth on trehalose as carbon source. Growth on trehalose is not restricted to respiration. The chain is Periplasmic/secreted acid trehalase ATH1 from Candida glabrata (Yeast).